A 282-amino-acid polypeptide reads, in one-letter code: 4-diphosphocytidyl-2-C-methyl-D-erythritol kinase (282 aa).

Lys-9 is an active-site residue. Residue 98-108 (PMGGGLGGGSS) coordinates ATP. Asp-140 is a catalytic residue.

It belongs to the GHMP kinase family. IspE subfamily. Homodimer.

The catalysed reaction is 4-CDP-2-C-methyl-D-erythritol + ATP = 4-CDP-2-C-methyl-D-erythritol 2-phosphate + ADP + H(+). The protein operates within isoprenoid biosynthesis; isopentenyl diphosphate biosynthesis via DXP pathway; isopentenyl diphosphate from 1-deoxy-D-xylulose 5-phosphate: step 3/6. Functionally, catalyzes the phosphorylation of the position 2 hydroxy group of 4-diphosphocytidyl-2C-methyl-D-erythritol. In Salmonella paratyphi A (strain ATCC 9150 / SARB42), this protein is 4-diphosphocytidyl-2-C-methyl-D-erythritol kinase.